The following is a 204-amino-acid chain: Recombination protein RecR (204 aa).

The segment at 59-74 (CTRCNTFTELEICGTC) adopts a C4-type zinc-finger fold. Residues 82 to 181 (TLLCVVETPA…KVSRLARGVP (100 aa)) enclose the Toprim domain.

Belongs to the RecR family.

Functionally, may play a role in DNA repair. It seems to be involved in an RecBC-independent recombinational process of DNA repair. It may act with RecF and RecO. This is Recombination protein RecR from Cupriavidus metallidurans (strain ATCC 43123 / DSM 2839 / NBRC 102507 / CH34) (Ralstonia metallidurans).